A 5634-amino-acid polypeptide reads, in one-letter code: Hemicentin-1 (5634 aa).

Residues 1 to 21 (MIAQEVVHTVFLVALFRSSLA) form the signal peptide. Residues 41-216 (TLAFVFDVTG…EVLKWVEEAV (176 aa)) form the VWFA domain. Ig-like C2-type domains are found at residues 431–517 (PKVT…FDVS), 520–607 (PPII…VFLT), 612–697 (PKVT…STLR), 702–788 (PKLV…LTLD), 793–883 (PVFI…TTVT), 890–976 (PLIG…TSVA), 981–1067 (PSIQ…VQLT), 1072–1166 (PRVF…VKLS), 1171–1254 (PKIQ…AEVT), 1261–1353 (PSVE…YNLK), 1357–1446 (PPVI…FSVN), 1451–1540 (PSIL…IKLT), 1545–1633 (PSIK…FHVD), 1638–1723 (PTIE…REIK), 1732–1820 (PAVE…FEVT), 1825–1913 (PTIK…TQLH), 1918–2006 (PSLD…YSLQ), 2011–2096 (PSIS…RDID), 2103–2189 (PNIM…YNVN), 2194–2284 (PSIY…YNLQ), 2289–2378 (PSIT…YDLS), 2383–2472 (PSII…FGLS), 2477–2565 (PHIV…FRLN), 2570–2661 (PTIA…YEVK), 2665–2762 (PPII…VNIQ), 2765–2863 (PSFQ…YDVH), 2867–2958 (PPVI…FNLN), 2962–3050 (PPSV…VSLT), and 3055–3145 (PSIK…FHLN). 2 cysteine pairs are disulfide-bonded: cysteine 451–cysteine 499 and cysteine 541–cysteine 591. The O-linked (GalNAc...) threonine glycan is linked to threonine 615. 11 cysteine pairs are disulfide-bonded: cysteine 633/cysteine 681, cysteine 723/cysteine 772, cysteine 814/cysteine 867, cysteine 911/cysteine 960, cysteine 1002/cysteine 1051, cysteine 1101/cysteine 1150, cysteine 1192/cysteine 1240, cysteine 1287/cysteine 1337, cysteine 1381/cysteine 1430, cysteine 1474/cysteine 1524, and cysteine 1568/cysteine 1617. 2 O-linked (GalNAc...) threonine glycosylation sites follow: threonine 1292 and threonine 1386. A glycan (O-linked (GalNAc...) threonine) is linked at threonine 1639. 2 cysteine pairs are disulfide-bonded: cysteine 1662–cysteine 1711 and cysteine 1755–cysteine 1804. O-linked (GalNAc...) threonine glycosylation is present at threonine 1826. Disulfide bonds link cysteine 1847–cysteine 1897, cysteine 1941–cysteine 1990, cysteine 2032–cysteine 2082, cysteine 2124–cysteine 2173, cysteine 2217–cysteine 2268, cysteine 2313–cysteine 2362, cysteine 2407–cysteine 2456, cysteine 2500–cysteine 2549, cysteine 2596–cysteine 2645, cysteine 2695–cysteine 2744, cysteine 2798–cysteine 2847, cysteine 2893–cysteine 2942, cysteine 2985–cysteine 3034, and cysteine 3080–cysteine 3129. O-linked (GalNAc...) threonine glycosylation occurs at threonine 3151. 15 consecutive Ig-like C2-type domains span residues 3155 to 3227 (PETE…VASN), 3244 to 3334 (PSVA…FNLN), 3339 to 3428 (PKIR…YSLQ), 3433 to 3515 (PNMD…GEVS), 3526 to 3614 (PHIN…YLVR), 3619 to 3707 (PNIA…FNLT), 3712 to 3798 (PSIG…IDLQ), 3803 to 3891 (PSIA…VDLT), 3896 to 3982 (PTIA…VTLR), 3987 to 4073 (PVIQ…VKLN), 4077 to 4163 (PPVI…STLT), 4168 to 4252 (PRIQ…RIVT), 4259 to 4332 (PTFT…AENS), 4347 to 4434 (PPVF…MSLT), and 4439 to 4526 (PIIT…VIVQ). Intrachain disulfides connect cysteine 3172–cysteine 3223, cysteine 3267–cysteine 3318, cysteine 3363–cysteine 3412, cysteine 3456–cysteine 3505, cysteine 3549–cysteine 3598, cysteine 3642–cysteine 3691, cysteine 3733–cysteine 3782, and cysteine 3824–cysteine 3875. Threonine 3897 is a glycosylation site (O-linked (GalNAc...) threonine). Cystine bridges form between cysteine 3917–cysteine 3966, cysteine 4008–cysteine 4057, cysteine 4099–cysteine 4147, cysteine 4189–cysteine 4238, cysteine 4280–cysteine 4327, cysteine 4370–cysteine 4418, cysteine 4460–cysteine 4508, cysteine 4540–cysteine 4577, cysteine 4544–cysteine 4582, cysteine 4555–cysteine 4567, cysteine 4597–cysteine 4634, cysteine 4601–cysteine 4639, cysteine 4612–cysteine 4624, cysteine 4654–cysteine 4691, cysteine 4658–cysteine 4696, cysteine 4669–cysteine 4681, cysteine 4711–cysteine 4748, cysteine 4715–cysteine 4753, cysteine 4726–cysteine 4738, cysteine 4768–cysteine 4805, cysteine 4772–cysteine 4810, cysteine 4783–cysteine 4795, cysteine 4825–cysteine 4862, cysteine 4829–cysteine 4867, and cysteine 4840–cysteine 4852. Threonine 4379 is a glycosylation site (O-linked (GalNAc...) threonine). 6 TSP type-1 domains span residues 4528-4583 (HGGF…KLCP), 4585-4640 (DGHW…RPCP), 4642-4697 (HGVW…RHCP), 4699-4754 (DGRW…DPCP), 4756-4811 (HGNW…DMCP), and 4813-4868 (DGSW…QACP). Residues 4870 to 5092 (GPQRARGSVI…SKGDRSNQCP (223 aa)) form the Nidogen G2 beta-barrel domain. The region spanning 5106 to 5145 (DEDECTAGNPCSHTCHNAIGAYYCSCPKGLTIAADGRTCQ) is the EGF-like 1; calcium-binding domain. Disulfide bonds link cysteine 5110–cysteine 5120, cysteine 5116–cysteine 5129, and cysteine 5131–cysteine 5144. One can recognise an EGF-like 2; calcium-binding domain in the interval 5146-5189 (DIDECALGGHTCRAGQDCDNTIGSYRCVVHCGTGFRRTSDGLSC). An EGF-like 3; calcium-binding domain is found at 5191–5228 (DINECQESSPCHQRCFNVIGSFHCGCEAGYQLKGRKCI). Intrachain disulfides connect cysteine 5195-cysteine 5205, cysteine 5201-cysteine 5214, and cysteine 5216-cysteine 5227. One can recognise an EGF-like 4; calcium-binding domain in the interval 5229–5269 (DVNECRQNVCRPDQHCKNTRGGYKCIDLCPSGMTKAENGTC). In terms of domain architecture, EGF-like 5; calcium-binding spans 5271–5306 (DIDECKDGTHQCRYNQICENTRGSYRCACPRGYRSQ). 8 disulfides stabilise this stretch: cysteine 5275/cysteine 5288, cysteine 5282/cysteine 5297, cysteine 5318/cysteine 5329, cysteine 5325/cysteine 5338, cysteine 5340/cysteine 5353, cysteine 5435/cysteine 5445, cysteine 5441/cysteine 5454, and cysteine 5456/cysteine 5469. Residues 5314 to 5354 (DINECEQVPKPCAHQCSNSPGSFKCICLPGQQLLGDGKSCA) form the EGF-like 6; calcium-binding domain. An EGF-like 7; calcium-binding domain is found at 5431–5470 (DIDECQNRDTCQHECKNTIGSYQCVCPPGYRLMLNGKTCQ).

In the kidney, expressed in the glomerulus (at protein level). Expressed in whisker and hair follicles, eye, tongue, and splenic and lymph node conduits (at protein level). In the embryo, localizes to the cleavage furrow at the two-cell stage (at protein level). In neonatal skin, expressed throughout the dermis (at protein level). In adult skin, strongly concentrated at the dermal side of the basement membrane but not detectable in the deeper dermis. Shows tendon-specific localization at the myotendinous junction and is also detected in the perichondrium (at protein level). Expressed by chondrocytes residing in articular cartilage and the femoral growth plate of 52 week old mice (at protein level). Expressed in vascular endothelial cells in coronary arteries and sparsely in endocardial endothelium (at protein level). Expressed in skin, tongue, lung and eye. At 14.5 dpc, expressed in the vibrissae, dermis, forelimb, kidney, intestine, lung and iliac cartilage where expression is found mainly in mesenchymal cells.

Its subcellular location is the secreted. It localises to the extracellular space. It is found in the extracellular matrix. The protein resides in the basement membrane. The protein localises to the cytoplasm. Its subcellular location is the cell junction. It localises to the cleavage furrow. Functionally, involved in transforming growth factor beta-mediated rearrangement of the podocyte cytoskeleton which includes reduction of F-actin fibers and broadening, flattening and elongation of podocytes. Plays a role in basement membrane organization. May promote cleavage furrow maturation during cytokinesis in preimplantation embryos. May play a role in the architecture of adhesive and flexible epithelial cell junctions. May play a role during myocardial remodeling by imparting an effect on cardiac fibroblast migration. The chain is Hemicentin-1 from Mus musculus (Mouse).